The primary structure comprises 55 residues: ATP synthase small subunit 6, mitochondrial (55 aa).

Residues 1–15 (MRQFDPWPVFFRREW) constitute a mitochondrion transit peptide. The helical transmembrane segment at 20–39 (PFLVGFAVTGAIITKMSLGF) threads the bilayer.

This sequence belongs to the ATPase 6 subunit family.

The protein resides in the mitochondrion inner membrane. In terms of biological role, mitochondrial membrane ATP synthase (F(1)F(0) ATP synthase or Complex V) produces ATP from ADP in the presence of a proton gradient across the membrane which is generated by electron transport complexes of the respiratory chain. F-type ATPases consist of two structural domains, F(1) - containing the extramembraneous catalytic core and F(0) - containing the membrane proton channel, linked together by a central stalk and a peripheral stalk. During catalysis, ATP synthesis in the catalytic domain of F(1) is coupled via a rotary mechanism of the central stalk subunits to proton translocation. Part of the complex F(0) domain. Confers tolerance to several abiotic stresses (e.g. salt, mannitol, drought, oxidative and cold stresses), probably by providing additional energy needed for cell homeostasis. The sequence is that of ATP synthase small subunit 6, mitochondrial from Solanum tuberosum (Potato).